Reading from the N-terminus, the 341-residue chain is Peroxisomal membrane protein import receptor PEX19 (341 aa).

A compositionally biased stretch (acidic residues) spans 1-18 (MNENEYDNFDDLDDLLDE). Disordered regions lie at residues 1–26 (MNEN…LDEQ), 39–66 (DSEN…EDPE), 109–141 (VPRQ…FKNI), 293–312 (LGDS…NEEE), and 318–341 (LEID…CKQQ). Over residues 39 to 53 (DSENKEKNAESKDSD) the composition is skewed to basic and acidic residues. S61 bears the Phosphoserine mark. Residues 113–141 (QMEQGSSSLKSNSTDKGTLNGSNPGFKNI) are compositionally biased toward polar residues. Position 303 is a phosphoserine (S303). A compositionally biased stretch (basic and acidic residues) spans 330–341 (LDKELTDGCKQQ). Residue C338 is modified to Cysteine methyl ester. The S-farnesyl cysteine moiety is linked to residue C338. The propeptide at 339-341 (KQQ) is removed in mature form.

It belongs to the peroxin-19 family. In terms of assembly, interacts (farnesylated) with PEX3; farnesylation is required for this interaction. Interacts with PEX2, PEX5, PEX10, PEX11, PEX12, PEX13, PEX14, PEX17, PEX22, PEX25, PEX30 and PEX32; the interaction requires well-defined PEX19-binding sites within the peroxisomal membrane protein targeting signal (mPTS) of the PMPs and is independent on the presence of PEX3. Interacts with VPS1.

It localises to the cytoplasm. The protein resides in the peroxisome membrane. The protein localises to the endoplasmic reticulum membrane. Required for proper post-translational import and stabilization of peroxisomal membrane proteins (PMPs). Acts as a cytosolic import receptor for PMPs and delivers them to the docking factor PEX3 at the peroxisomal membrane for subsequent insertion into the membrane. Acts as a chaperone in stabilizing or maintaining PMPs in the lipid bilayer. Directs PEX17, a peripheral component of the peroxisomal matrix protein translocation machinery, to peroxisomes. Stabilizes VPS1, a protein required for peroxisomal fission, at the peroxisomal membrane. Also acts in conjunction with PEX3 in the formation of peroxisomes from preperoxisomal compartments at the endoplasmic reticulum during de novo peroxisome synthesis, probably via the import of additional PMPs. The sequence is that of Peroxisomal membrane protein import receptor PEX19 (PEX19) from Saccharomyces cerevisiae (strain YJM789) (Baker's yeast).